Reading from the N-terminus, the 243-residue chain is 3-deoxy-manno-octulosonate cytidylyltransferase (243 aa).

This sequence belongs to the KdsB family.

Its subcellular location is the cytoplasm. The catalysed reaction is 3-deoxy-alpha-D-manno-oct-2-ulosonate + CTP = CMP-3-deoxy-beta-D-manno-octulosonate + diphosphate. The protein operates within nucleotide-sugar biosynthesis; CMP-3-deoxy-D-manno-octulosonate biosynthesis; CMP-3-deoxy-D-manno-octulosonate from 3-deoxy-D-manno-octulosonate and CTP: step 1/1. Functionally, activates KDO (a required 8-carbon sugar) for incorporation into bacterial lipopolysaccharide in Gram-negative bacteria. This is 3-deoxy-manno-octulosonate cytidylyltransferase from Wigglesworthia glossinidia brevipalpis.